The chain runs to 121 residues: Small ribosomal subunit protein uS12c (121 aa).

This sequence belongs to the universal ribosomal protein uS12 family. In terms of assembly, part of the 30S ribosomal subunit.

The protein resides in the plastid. Its subcellular location is the apicoplast. With S4 and S5 plays an important role in translational accuracy. Located at the interface of the 30S and 50S subunits. The sequence is that of Small ribosomal subunit protein uS12c (rps12) from Toxoplasma gondii.